The primary structure comprises 178 residues: uncharacterized protein (178 aa).

Residues 7-29 (FFVIFSILWGSLFLFSIIGSLGT) form a helical membrane-spanning segment.

It is found in the membrane. This is an uncharacterized protein from Bacillus subtilis (strain 168).